The sequence spans 286 residues: Translocon-associated protein subunit alpha (286 aa).

The signal sequence occupies residues 1-18 (MRLLPRLLLLLLLVFPAT). The Lumenal segment spans residues 19–207 (VLFRGGPRGL…EREDGLDGET (189 aa)). Over residues 39–75 (EETVEDSIIEDEDDEAEVEEDEPTDLVEDKEEEDVSG) the composition is skewed to acidic residues. The segment at 39–83 (EETVEDSIIEDEDDEAEVEEDEPTDLVEDKEEEDVSGEPEASPSA) is disordered. Residues Asn136 and Asn191 are each glycosylated (N-linked (GlcNAc...) asparagine). Residues 208 to 228 (IFMYMFLAGLGLLVIVGLHQL) form a helical membrane-spanning segment. Over 229 to 286 (LESRKRKRPIQKVEMGTSSQNDVDMSWIPQETLNQINKASPRRLPRKRAQKRSVGSDE) the chain is Cytoplasmic. Position 247 is a phosphoserine (Ser247). Thr260 carries the phosphothreonine modification. A disordered region spans residues 261 to 286 (LNQINKASPRRLPRKRAQKRSVGSDE). Ser268 is modified (phosphoserine). Residues 268 to 279 (SPRRLPRKRAQK) show a composition bias toward basic residues.

The protein belongs to the TRAP-alpha family. In terms of assembly, heterotetramer of TRAP-alpha, TRAP-beta, TRAP-delta and TRAP-gamma. Interacts with palmitoylated calnexin (CALX), the interaction is required for efficient folding of glycosylated proteins.

The protein localises to the endoplasmic reticulum membrane. Functionally, TRAP proteins are part of a complex whose function is to bind calcium to the ER membrane and thereby regulate the retention of ER resident proteins. May be involved in the recycling of the translocation apparatus after completion of the translocation process or may function as a membrane-bound chaperone facilitating folding of translocated proteins. In Homo sapiens (Human), this protein is Translocon-associated protein subunit alpha (SSR1).